The chain runs to 282 residues: ATP synthase subunit a (282 aa).

A run of 6 helical transmembrane segments spans residues 38–58 (VDSM…LWLA), 97–117 (FVAP…AMDM), 145–165 (VVPT…LLLC), 187–207 (FGSH…EFVA), 225–247 (LIFI…GHIV), and 261–281 (TLQA…AHEG).

Belongs to the ATPase A chain family. F-type ATPases have 2 components, CF(1) - the catalytic core - and CF(0) - the membrane proton channel. CF(1) has five subunits: alpha(3), beta(3), gamma(1), delta(1), epsilon(1). CF(0) has three main subunits: a(1), b(2) and c(9-12). The alpha and beta chains form an alternating ring which encloses part of the gamma chain. CF(1) is attached to CF(0) by a central stalk formed by the gamma and epsilon chains, while a peripheral stalk is formed by the delta and b chains.

The protein localises to the cell inner membrane. Its function is as follows. Key component of the proton channel; it plays a direct role in the translocation of protons across the membrane. In Azoarcus sp. (strain BH72), this protein is ATP synthase subunit a.